The sequence spans 1349 residues: MTNEKMIFRNRVVDKGQLRNLISWAFTNYGTARTAVMADKLKDLGFRYATKAGVSISVDDLMIPPTKRLLLEAAEEEIRATETRYQRGEITEVERFQKVIDTWNGTSEALKDEVVVHFKKTNPLNSVYMMAFSGARGNISQVRQLVGMRGLMADPQGEIIDLPIKTNFREGLTVTEYIISSYGARKGLVDTALRTADSGYLTRRLVDVSQDVIIREFDCGTTRGLTIGPMTEGAKTLIPLATRLMGRVIGEDVVHPVTKELIAARNSPIPEDLAKKIEKSGVGEVVVRSPLTCEAARSVCQHCYGWSLAHAKMVDLGEAVGIIAAQSIGEPGTQLTMRTFHTGGVFTGEVAQQVRSKIDGTVKLPRKLKTRTYRTRHGEDALYVEANGIMLLEPTKVGDVTPENQEVHLTQGSTLYVFDGNKVKQGQLLAEVALGGRTTRTNTEKAVKDVASDLAGEVQFAEVVPEQKTDRQGNTTTTAARGGLIWILSGEVYNLPPGAELVVKNGDAIAANGVLAETKLASLHGGVVRLPEATPGKSTREIEIITASVVLDQATVTVQSSQGRNNYLVSTGNNQVFNLRATPGTKVQNGQVVAELIDDRYRTTTGGFLKFAGVEVQKKGKAKLGYEVVQGGTLLWIPEESHEVNKDISLLLVEDGQFVEAGTEVVKDIFCQNSGVVEVTQKNDILREVVVKPGELLMVDDPESVIGRDNTFIQPGEEFQGNVATELRYIQYVETPEGPALLSRPVVEFAVPDNPDVPSTTSVSQQTGRSIQLRAVQRLPYKDSERVKSVEGVELLRTQLVLEIEQEGEQDHNASPLAADIELVEDTENPEVQRLQLVILESLVIRRDITADATQGSTQTTLEVYDGLTIAPGSVVARTQILCKEGGEVRGVRKGTENVRRCLVLRDVDRLTINTSTQPKVKVGDLLVEGTEVAPGVFAPESGQVVDIKNAAAASGGESALSTKNYVITTRIGRPYRVSPGAVLQIEDGDLVQRGDNLVLLVFERAKTGDIIQGLPRIEELLEARKPKEACILCRRGGEVKVVYAESGDEAIAIKVVESNGVVTDYPLGPGQNLIVPDGSIVLAGQPLTDGPSNPHEILEIFFSLGSEDGIYACASLALQKVQTFLVNEVQMVYQSQGIDISDKHIEVIVRQMTNKVRIDDGGDTTMLPGELVELRQVEQVNEAMAITGGARAQYTPVLLGITKASLNTDSFISAASFQETTRVLTEAAIEGKSDWLRGLKENVIIGRLIPAGTGYNTYEEPGAIDDYAAEISSSVLDEVDDPLDMVLDDRTARTYNLDSPTLGESGFGSRRAERSVLDDEDELIADEVVDDDDFEEEEEDDEDDFDDE.

Positions 219, 293, 300, and 303 each coordinate Zn(2+). The interval 1298 to 1349 (LDSPTLGESGFGSRRAERSVLDDEDELIADEVVDDDDFEEEEEDDEDDFDDE) is disordered. A compositionally biased stretch (acidic residues) spans 1319 to 1349 (DDEDELIADEVVDDDDFEEEEEDDEDDFDDE).

The protein belongs to the RNA polymerase beta' chain family. RpoC2 subfamily. As to quaternary structure, in cyanobacteria the RNAP catalytic core is composed of 2 alpha, 1 beta, 1 beta', 1 gamma and 1 omega subunit. When a sigma factor is associated with the core the holoenzyme is formed, which can initiate transcription. Zn(2+) is required as a cofactor.

It catalyses the reaction RNA(n) + a ribonucleoside 5'-triphosphate = RNA(n+1) + diphosphate. Its function is as follows. DNA-dependent RNA polymerase catalyzes the transcription of DNA into RNA using the four ribonucleoside triphosphates as substrates. The polypeptide is DNA-directed RNA polymerase subunit beta' (Nostoc punctiforme (strain ATCC 29133 / PCC 73102)).